Here is a 788-residue protein sequence, read N- to C-terminus: Phenylalanine--tRNA ligase beta subunit (788 aa).

Residues 39–147 form the tRNA-binding domain; the sequence is FNVSGEIITA…DPVELGVNVV (109 aa). The B5 domain maps to 399-472; sequence IEPKKVMLRK…RIYGYEKVES (74 aa). Mg(2+)-binding residues include aspartate 450, aspartate 456, glutamate 459, and glutamate 460. The 94-residue stretch at 694-787 folds into the FDX-ACB domain; it reads PRFPAVRRDI…AEREFGIRRR (94 aa).

It belongs to the phenylalanyl-tRNA synthetase beta subunit family. Type 1 subfamily. As to quaternary structure, tetramer of two alpha and two beta subunits. Mg(2+) is required as a cofactor.

The protein localises to the cytoplasm. The enzyme catalyses tRNA(Phe) + L-phenylalanine + ATP = L-phenylalanyl-tRNA(Phe) + AMP + diphosphate + H(+). The sequence is that of Phenylalanine--tRNA ligase beta subunit (pheT) from Thermotoga maritima (strain ATCC 43589 / DSM 3109 / JCM 10099 / NBRC 100826 / MSB8).